Here is an 87-residue protein sequence, read N- to C-terminus: uncharacterized protein (87 aa).

2 helical membrane passes run 25-45 and 53-73; these read LVAAVIAVTMALWLGVQWLGG and YAFLADLAAIGALIWSLLVTF.

It is found in the cell membrane. This is an uncharacterized protein from Paracoccus denitrificans.